The chain runs to 739 residues: MSSENKEQHDLSPRDLPEEAFGFPSELPLETQRRSGTDLRQSETGHGRRAFRRIHMELREKPDTDIKQFVIRELQKSCQCSAAKVRDGAFDFFPVLRWLPKYDLKKNILGDVMSGLIVGILLVPQSIAYSLLAGQEPIYGLYTSFFASIIYFLFGTSRHISVGIFGILCLMIGEVVDRELHKACPDTDATSSSIAVFSSGCVVVNHTLDGLCDKSCYAIKIGSTVTFMAGVYQVAMGFFQVGFVSVYLSDALLSGFVTGASFTILTSQAKYLLGLSLPRSHGVGSVITTWIHIFRNIRNTNICDLITSLLCLLVLVPSKELNEHFKDKLKAPIPVELIVVVAATLASHFGKLNGNYNSSIAGHIPTGFMPPKAPDWSLIPNVAVDAIAISIIGFAITVSLSEMFAKKHGYTVKANQEMYAIGFCNIIPSFFHCITTSAALAKTLVKESTGCQTQLSAIVTALVLLLVLLVIAPLFYSLQKCVLGVITIVNLRGALLKFRDLPKMWRLSRMDTVIWFVTMLSSALLSTEIGLLVGVCFSMFCVILRTQKPKNSLLGLEEESETFESISTYKNLRSKSGIKVFRFIAPLYYINKECFKSALYKKALNPVLVKAAWKKAAKRKLKEEMVTFRGDPDEVSMQLSHDPLEVHTIVIDCSAIQFLDTAGIHTLKEVRRDYEAVGIQVLLAQCNPSVRDSLARGEYCKKEEETLLFYSLSEAVAFAEDSQNQKGVCVVNGLSLSGD.

Basic and acidic residues-rich tracts occupy residues 1–17 and 31–46; these read MSSE…RDLP and TQRR…ETGH. The disordered stretch occupies residues 1-47; sequence MSSENKEQHDLSPRDLPEEAFGFPSELPLETQRRSGTDLRQSETGHG. Position 12 is a phosphoserine (S12). Helical transmembrane passes span 112–132 and 137–157; these read VMSG…YSLL and PIYG…FGTS. An N-linked (GlcNAc...) asparagine glycan is attached at N205. 2 helical membrane-spanning segments follow: residues 227–247 and 255–275; these read FMAG…VSVY and GFVT…LLGL. N357 carries an N-linked (GlcNAc...) asparagine glycan. 4 consecutive transmembrane segments (helical) span residues 378–398, 420–440, 455–475, and 524–544; these read LIPN…AITV, AIGF…SAAL, LSAI…APLF, and LLST…CVIL. Residues 568–719 form the STAS domain; that stretch reads TYKNLRSKSG…YSLSEAVAFA (152 aa).

This sequence belongs to the SLC26A/SulP transporter (TC 2.A.53) family. Post-translationally, N-glycosylated. Distributed mainly in the thymus, testis and osteoblastic cells. Highly expressed in the bone, cartilage, kidney and colon.

The protein localises to the cell membrane. It localises to the apical cell membrane. The catalysed reaction is oxalate(in) + sulfate(out) = oxalate(out) + sulfate(in). It carries out the reaction sulfate(out) + 2 chloride(in) = sulfate(in) + 2 chloride(out). The enzyme catalyses oxalate(out) + 2 chloride(in) = oxalate(in) + 2 chloride(out). It catalyses the reaction bromide(in) + chloride(out) = bromide(out) + chloride(in). The catalysed reaction is nitrate(in) + chloride(out) = nitrate(out) + chloride(in). It carries out the reaction iodide(in) + chloride(out) = iodide(out) + chloride(in). In terms of biological role, sulfate transporter which mediates sulfate uptake into chondrocytes in order to maintain adequate sulfation of proteoglycans which is needed for cartilage development. Mediates electroneutral anion exchange of sulfate ions for oxalate ions, sulfate and oxalate ions for chloride and/or hydroxyl ions and chloride ions for bromide, iodide and nitrate ions. The coupling of sulfate transport to both hydroxyl and chloride ions likely serves to ensure transport at both acidic pH when most sulfate uptake is mediated by sulfate-hydroxide exchange and alkaline pH when most sulfate uptake is mediated by sulfate-chloride exchange. Essential for chondrocyte proliferation, differentiation and cell size expansion. This chain is Sulfate transporter (Slc26a2), found in Mus musculus (Mouse).